The following is a 500-amino-acid chain: MTEQVQDENKLIAERRAKLESIRPNCSANAHPNTFRRTHKAAELQEKYGQNTKEELEALGFKTSIAGRIMAKRGPFLVIQDVSGRIQAYAEKGVQADLKDRYQGLDIGDIIGVTGQLHLSGKGDLYVNMEEYQLLTKALRPLPEKFHGLTDQETRYRQRYVDLIVNEESRQAFVMRSKVVAAIRNFMIKKEFMEVETPMMHVIPGGASARPFITHHNALDMPMYLRIAPELYLKRLVVGGFERVFEINRNFRNEGLSPRHNPEFTMMEFYMAYADYKDLMDLTEELLSSIAIELLGSAQMPYGEHTVDFGGPYARLSMLEAIQKYNPDNATIQAMTYEQVKDLEFMRELAISLGIKIEKFWTCGQLLEEIFGETAEWQLMQPTFITGYPADISPLARRNDDNHFITDRFEFFIGGREVANGFSELNDAEDQDSRFKAQVDAKDAGDDEAMFYDADYITALEHGLPPTAGQGIGIDRLVMLFTNTHTIRDVILFPAMRPQA.

The Mg(2+) site is built by E410 and E417.

It belongs to the class-II aminoacyl-tRNA synthetase family. In terms of assembly, homodimer. Requires Mg(2+) as cofactor.

It localises to the cytoplasm. It carries out the reaction tRNA(Lys) + L-lysine + ATP = L-lysyl-tRNA(Lys) + AMP + diphosphate. This is Lysine--tRNA ligase from Shewanella sp. (strain ANA-3).